The primary structure comprises 371 residues: MEKRPEDTRVVVGMSGGVDSSVAALLLKEQGYDVIGIFMKNWDDTDENGFCTATEDYEDVIRVCNQIGIPYYAVNFEKQYYEKVFQYFLDEYKAGRTPNPDVLCNKEIKFKAFLEHALSLGADYLATGHYARVDRSGGKVRMLRGIDENKDQTYFLNQLTEDTLSKVMFPIGELQKSRVREIAKEAELATATKKDSTGICFIGERNFKTFLSQYLPAQPGDMMTMDGEVKGRHDGLMYYTIGQRHGLGIGGSGEPWFAVGKDLEKNILYVDQGFHNPLLYSDKITATNISWVRSDIMKGEEISCTAKFRYRQEDHKVTVRMTGEGEAEVIFDEQVRAVTPGQAVVFYDGEECLGGGTIDDVYKDGTKLWYV.

ATP-binding positions include 13–20 (GMSGGVDS) and Met39. Residues 99 to 101 (NPD) form an interaction with target base in tRNA region. The Nucleophile role is filled by Cys104. Cys104 and Cys200 form a disulfide bridge. Residue Gly128 coordinates ATP. Positions 150 to 152 (KDQ) are interaction with tRNA. Cys200 serves as the catalytic Cysteine persulfide intermediate. Residues 309–310 (RY) are interaction with tRNA.

It belongs to the MnmA/TRMU family.

It localises to the cytoplasm. It catalyses the reaction S-sulfanyl-L-cysteinyl-[protein] + uridine(34) in tRNA + AH2 + ATP = 2-thiouridine(34) in tRNA + L-cysteinyl-[protein] + A + AMP + diphosphate + H(+). In terms of biological role, catalyzes the 2-thiolation of uridine at the wobble position (U34) of tRNA, leading to the formation of s(2)U34. This chain is tRNA-specific 2-thiouridylase MnmA, found in Bacillus subtilis (strain 168).